A 111-amino-acid chain; its full sequence is Protein GLUTAMINE DUMPER 6 (111 aa).

Over 1-16 the chain is Extracellular; that stretch reads MRPTPKVEIWKSPVPY. The helical transmembrane segment at 17-37 threads the bilayer; it reads LFGGLFLLVLLIALALLSLVC. Residues 38–111 are Cytoplasmic-facing; it reads THQKPSSSSN…NCDNVTVIST (74 aa). Residues 40 to 49 show a composition bias toward polar residues; the sequence is QKPSSSSNNN. A disordered region spans residues 40–63; it reads QKPSSSSNNNHMDEEDDVGDKDAK. The short motif at 75 to 79 is the VIMAG; degenerate element; it reads VILAG.

Belongs to the GLUTAMINE DUMPER 1 (TC 9.B.60) family. Expressed in the vascular tissues.

The protein resides in the membrane. Its function is as follows. Probable subunit of an amino acid transporter involved in the regulation of the amino acid metabolism. Stimulates amino acid export by activating nonselective amino acid facilitators. This Arabidopsis thaliana (Mouse-ear cress) protein is Protein GLUTAMINE DUMPER 6 (GDU6).